Consider the following 389-residue polypeptide: Very-long-chain 3-oxoacyl-CoA reductase (389 aa).

A helical transmembrane segment spans residues 34 to 54 (IAVFLLAIGLFHVALKVVSYV). 7 residues coordinate NADP(+): V80, D134, N162, Y239, K243, V272, and S274. The active-site Proton donor is Y239. The active-site Lowers pKa of active site Tyr is K243. Positions 359 to 389 (QAAGGVADPKNTTAAREGYATESLKNETLKH) are disordered.

The protein belongs to the short-chain dehydrogenases/reductases (SDR) family.

Its subcellular location is the endoplasmic reticulum membrane. The catalysed reaction is a very-long-chain (3R)-3-hydroxyacyl-CoA + NADP(+) = a very-long-chain 3-oxoacyl-CoA + NADPH + H(+). It participates in lipid metabolism; fatty acid biosynthesis. In terms of biological role, component of the microsomal membrane bound fatty acid elongation system, which produces the 26-carbon very long-chain fatty acids (VLCFA) from palmitate. Catalyzes the reduction of the 3-ketoacyl-CoA intermediate that is formed in each cycle of fatty acid elongation. VLCFAs serve as precursors for ceramide and sphingolipids. This is Very-long-chain 3-oxoacyl-CoA reductase from Yarrowia lipolytica (strain CLIB 122 / E 150) (Yeast).